Consider the following 588-residue polypeptide: Aspartate--tRNA ligase (588 aa).

Glu-174 lines the L-aspartate pocket. The tract at residues 198 to 201 is aspartate; it reads QLFK. Arg-220 is an L-aspartate binding site. Residues 220–222 and Gln-229 each bind ATP; that span reads RDE. Residue His-448 coordinates L-aspartate. Residue Glu-482 coordinates ATP. Arg-489 contributes to the L-aspartate binding site. 534-537 contacts ATP; sequence GIDR.

Belongs to the class-II aminoacyl-tRNA synthetase family. Type 1 subfamily. In terms of assembly, homodimer.

Its subcellular location is the cytoplasm. The catalysed reaction is tRNA(Asp) + L-aspartate + ATP = L-aspartyl-tRNA(Asp) + AMP + diphosphate. Its function is as follows. Catalyzes the attachment of L-aspartate to tRNA(Asp) in a two-step reaction: L-aspartate is first activated by ATP to form Asp-AMP and then transferred to the acceptor end of tRNA(Asp). The polypeptide is Aspartate--tRNA ligase (Xanthomonas euvesicatoria pv. vesicatoria (strain 85-10) (Xanthomonas campestris pv. vesicatoria)).